The chain runs to 134 residues: Large ribosomal subunit protein uL18 (134 aa).

The segment at methionine 1–arginine 25 is disordered. The segment covering asparagine 7–threonine 19 has biased composition (basic and acidic residues).

Belongs to the universal ribosomal protein uL18 family. In terms of assembly, part of the 50S ribosomal subunit; part of the 5S rRNA/L5/L18/L25 subcomplex. Contacts the 5S and 23S rRNAs.

This is one of the proteins that bind and probably mediate the attachment of the 5S RNA into the large ribosomal subunit, where it forms part of the central protuberance. This is Large ribosomal subunit protein uL18 from Corynebacterium jeikeium (strain K411).